We begin with the raw amino-acid sequence, 505 residues long: Lysine--tRNA ligase (505 aa).

Glu-415 and Glu-422 together coordinate Mg(2+).

The protein belongs to the class-II aminoacyl-tRNA synthetase family. As to quaternary structure, homodimer. Mg(2+) serves as cofactor.

The protein localises to the cytoplasm. It carries out the reaction tRNA(Lys) + L-lysine + ATP = L-lysyl-tRNA(Lys) + AMP + diphosphate. This is Lysine--tRNA ligase from Salmonella typhi.